A 357-amino-acid polypeptide reads, in one-letter code: Peptide chain release factor 1 (357 aa).

N5-methylglutamine is present on glutamine 234.

It belongs to the prokaryotic/mitochondrial release factor family. Post-translationally, methylated by PrmC. Methylation increases the termination efficiency of RF1.

It is found in the cytoplasm. Its function is as follows. Peptide chain release factor 1 directs the termination of translation in response to the peptide chain termination codons UAG and UAA. This Lactococcus lactis subsp. cremoris (strain MG1363) protein is Peptide chain release factor 1.